Here is a 352-residue protein sequence, read N- to C-terminus: Molybdenum import ATP-binding protein ModC (352 aa).

The ABC transporter domain maps to M1–E229. Residue G31–T38 coordinates ATP. Residues Q289–A352 enclose the Mop domain.

It belongs to the ABC transporter superfamily. Molybdate importer (TC 3.A.1.8) family. The complex is composed of two ATP-binding proteins (ModC), two transmembrane proteins (ModB) and a solute-binding protein (ModA).

The protein resides in the cell inner membrane. The catalysed reaction is molybdate(out) + ATP + H2O = molybdate(in) + ADP + phosphate + H(+). Its function is as follows. Part of the ABC transporter complex ModABC involved in molybdenum import. Responsible for energy coupling to the transport system. The chain is Molybdenum import ATP-binding protein ModC from Escherichia coli O6:K15:H31 (strain 536 / UPEC).